We begin with the raw amino-acid sequence, 103 residues long: Large ribosomal subunit protein bL21 (103 aa).

It belongs to the bacterial ribosomal protein bL21 family. In terms of assembly, part of the 50S ribosomal subunit. Contacts protein L20.

Its function is as follows. This protein binds to 23S rRNA in the presence of protein L20. This is Large ribosomal subunit protein bL21 from Yersinia enterocolitica serotype O:8 / biotype 1B (strain NCTC 13174 / 8081).